We begin with the raw amino-acid sequence, 124 residues long: Small ribosomal subunit protein uS12 (124 aa).

Asp89 is subject to 3-methylthioaspartic acid.

This sequence belongs to the universal ribosomal protein uS12 family. As to quaternary structure, part of the 30S ribosomal subunit. Contacts proteins S8 and S17. May interact with IF1 in the 30S initiation complex.

Functionally, with S4 and S5 plays an important role in translational accuracy. Interacts with and stabilizes bases of the 16S rRNA that are involved in tRNA selection in the A site and with the mRNA backbone. Located at the interface of the 30S and 50S subunits, it traverses the body of the 30S subunit contacting proteins on the other side and probably holding the rRNA structure together. The combined cluster of proteins S8, S12 and S17 appears to hold together the shoulder and platform of the 30S subunit. The chain is Small ribosomal subunit protein uS12 from Shewanella baltica (strain OS223).